A 154-amino-acid polypeptide reads, in one-letter code: Phospholipase A2 OS1 (154 aa).

The first 27 residues, 1–27, serve as a signal peptide directing secretion; that stretch reads MHPAHLLVLLAVCVSLLGAARIPPLPL. 7 disulfide bridges follow: cysteine 38/cysteine 104, cysteine 54/cysteine 153, cysteine 56/cysteine 72, cysteine 71/cysteine 132, cysteine 78/cysteine 125, cysteine 88/cysteine 118, and cysteine 111/cysteine 123. Glycine 57 and glycine 59 together coordinate Ca(2+). Residue histidine 75 is part of the active site. Aspartate 76 is a binding site for Ca(2+). Aspartate 126 is a catalytic residue.

The protein belongs to the phospholipase A2 family. Group I subfamily. D49 sub-subfamily. Monomer. It depends on Ca(2+) as a cofactor. As to expression, expressed by the venom gland.

Its subcellular location is the secreted. It catalyses the reaction a 1,2-diacyl-sn-glycero-3-phosphocholine + H2O = a 1-acyl-sn-glycero-3-phosphocholine + a fatty acid + H(+). Functionally, snake venom phospholipase A2 (PLA2) that has a low specific activity on phospholipid substrates, and is neither neurotoxic, nor myotoxic. Induces endothelial cell migration which is mediated, at least in part, by its hydrolytic products. Shows antimalarial activity, but is not able to potently inhibit HIV-1 replication. Binds in a calcium-independent fashion with very high affinity to a muscle-type (M-type) PLA2 receptor, but is a very poor ligand for neuronal-type (N-type) receptors. PLA2 catalyzes the calcium-dependent hydrolysis of the 2-acyl groups in 3-sn-phosphoglycerides. The sequence is that of Phospholipase A2 OS1 from Oxyuranus scutellatus scutellatus (Australian taipan).